The primary structure comprises 511 residues: Maturase K (511 aa).

This sequence belongs to the intron maturase 2 family. MatK subfamily.

Its subcellular location is the plastid. It is found in the chloroplast. Its function is as follows. Usually encoded in the trnK tRNA gene intron. Probably assists in splicing its own and other chloroplast group II introns. This is Maturase K from Trifolium burchellianum (Wild clover).